The sequence spans 432 residues: Adenylosuccinate synthetase (432 aa).

GTP is bound by residues 16 to 22 (GDEGKGK) and 44 to 46 (GHM). Asp-17 acts as the Proton acceptor in catalysis. Residues Asp-17 and Gly-44 each coordinate Mg(2+). Residues 17–20 (DEGK), 42–45 (NAGH), Thr-132, Arg-146, Gln-226, Thr-241, and Arg-305 contribute to the IMP site. The active-site Proton donor is the His-45. 301 to 307 (LNTGRPR) is a substrate binding site. Residues Arg-307, 333-335 (LFD), and 415-417 (SVG) each bind GTP.

It belongs to the adenylosuccinate synthetase family. In terms of assembly, homodimer. The cofactor is Mg(2+).

It is found in the cytoplasm. The catalysed reaction is IMP + L-aspartate + GTP = N(6)-(1,2-dicarboxyethyl)-AMP + GDP + phosphate + 2 H(+). It participates in purine metabolism; AMP biosynthesis via de novo pathway; AMP from IMP: step 1/2. Functionally, plays an important role in the de novo pathway of purine nucleotide biosynthesis. Catalyzes the first committed step in the biosynthesis of AMP from IMP. The polypeptide is Adenylosuccinate synthetase (Mycoplasma mycoides subsp. mycoides SC (strain CCUG 32753 / NCTC 10114 / PG1)).